We begin with the raw amino-acid sequence, 118 residues long: Large ribosomal subunit protein uL24 (118 aa).

The protein belongs to the universal ribosomal protein uL24 family. As to quaternary structure, part of the 50S ribosomal subunit.

Its function is as follows. One of two assembly initiator proteins, it binds directly to the 5'-end of the 23S rRNA, where it nucleates assembly of the 50S subunit. Functionally, one of the proteins that surrounds the polypeptide exit tunnel on the outside of the subunit. This is Large ribosomal subunit protein uL24 from Parasynechococcus marenigrum (strain WH8102).